The primary structure comprises 209 residues: MRAAAISTPKLDKMPGMFFSANPKELKGTTHSLLDDKMQKRRPKTFGMDMKAYLRSMIPHLESGMKSSKSKDVLSAAEVMQWSQSLEKLLANQTGQNVFGSFLKSEFSEENIEFWLACEDYKKTESDLLPCKAEEIYKAFVHSDAAKQINIDFRTRESTAKKIKAPTPTCFDEAQKVIYTLMEKDSYPRFLKSDIYLNLLNDLQANSLK.

Positions S85 to L200 constitute an RGS domain.

In terms of assembly, interacts with GNAI1 and GNAQ. As to expression, detected in peripheral blood monocytes. Expression is relatively low in B-cells and chronic lymphocytic leukemia B-cells; however, in other types of malignant B-cell such as non-Hodgkin lymphoma and hairy cell leukemia, expression is constitutively high.

It is found in the cell membrane. The protein localises to the cytoplasm. Its subcellular location is the cytosol. In terms of biological role, regulates G protein-coupled receptor signaling cascades, including signaling downstream of the N-formylpeptide chemoattractant receptors and leukotriene receptors. Inhibits B cell chemotaxis toward CXCL12. Inhibits signal transduction by increasing the GTPase activity of G protein alpha subunits thereby driving them into their inactive GDP-bound form. The sequence is that of Regulator of G-protein signaling 1 (RGS1) from Homo sapiens (Human).